A 932-amino-acid chain; its full sequence is MALKSPAFRRKFPLLVTGGLLALQPLATSYAVAAEQFDCQVSAAGGWDCKPKAPVNNLPPRPVHEGAAVSSGTEAASEGETADRPMLVTEAKGRALKSRSEDYSHLDWVPREKLTAAQLAETGPYCGGAYVEPTRPGMADTTPKDESPTYINAKVSKYQQEQQIATLAGDVVMRQGSMQAEADEANLYQTENRGELKGNVKIRDNGSLVVGDEAQIQLDTGEAQVDNAEYVMHKSHIRGSALYAKRGENAIIRLKDGTYTTCEPGSNAWQLKGNNITLNPATGFGTATNVTLRVKDFPVFYTPYIYFPIDDRRQSGFLPPSFSTSSDTGFMLVTPYYFNLAPNYDATLYPRYMAKRGLLMEGEFRYLTPSSEGQFGGAYLNDKDDDRKEQTDYKDQRWMVNWQHKGGLDERLMTEVDYTDISDPFYFQDLESDQIGVESRDLLNQQGALTYRGDNYTARLNVHAYEMATISQITPYDRLPQITLNGVLPYNPGGLVMGYESEAVRFDRDLKDDFVRDKDGNPDFSAGAAGRRLDQNVSGIARANGNRFNVAPSISLPMEASYGYLTPKLKYAYTHYDLDLDSQGKAQAIAQSANPAYGSYNSSLNRDVPIFSVDSGLYFDRNTSLFGTNYKQTLEPRLFYLNVPYKDQRDIPIFDSSETLFSYDSLFRDNRFSGTDRIGDENKLSLGVTTRWIEDNGFERQNFSIGQAYYFKDRKVQLPGIYYKDRQSAQSDTSPYALVYNYYFNRDWRFNSDFNWDPDSRSTRSGSAMFHYQPEDNPNKVVNLGYRYRNDTIIYDSTTGTWKEGGSYGNPGDPNYIKDYYKIQQHDFSVIWPIVPQWSVIARWQHDYNRNRTLEAMGGFEYDNCCWKLRLINRYWIDYDDFSQALPANEKGDHGVFLQIVLKGLGGVVGNKVESFLDQGIQGYREREDQAY.

The N-terminal stretch at 1-33 (MALKSPAFRRKFPLLVTGGLLALQPLATSYAVA) is a signal peptide. Positions 54–87 (PVNNLPPRPVHEGAAVSSGTEAASEGETADRPML) are disordered.

Belongs to the LptD family. Component of the lipopolysaccharide transport and assembly complex. Interacts with LptE and LptA.

The protein resides in the cell outer membrane. Together with LptE, is involved in the assembly of lipopolysaccharide (LPS) at the surface of the outer membrane. The protein is LPS-assembly protein LptD of Pseudomonas putida (strain GB-1).